A 310-amino-acid chain; its full sequence is MPEELSKKQTTRLNKLQKRLRREVGSAIADYNMIEDGDRVMCCLSGGKDSYAMLDILLNLQQRAPVQFEIIAVNLDQKQPGFPEDVLPAYLDSLNVPYHILEKDTYSIVKEKIPEGKTTCSLCSRLRRGTLYGFAQRIGATKIALGHHRDDIIETLFLNMFFGGKMKAMPPKLLSDDGANVVIRPLAYCREKDLEEYAELKKFPIIPCNLCGSQENLKRQAVKDMLNQWNRQFPGRIETIFTAMQNTAPSQGVDREQFDFVSLKRDPDAPMKGDVAEANLPAFDFLDIANSGHIDLDAAKRIDIVNVYEV.

Residues 45 to 50 (SGGKDS) carry the PP-loop motif motif. Residues C120, C123, and C211 each contribute to the [4Fe-4S] cluster site.

It belongs to the TtcA family. In terms of assembly, homodimer. Mg(2+) is required as a cofactor. Requires [4Fe-4S] cluster as cofactor.

Its subcellular location is the cytoplasm. It carries out the reaction cytidine(32) in tRNA + S-sulfanyl-L-cysteinyl-[cysteine desulfurase] + AH2 + ATP = 2-thiocytidine(32) in tRNA + L-cysteinyl-[cysteine desulfurase] + A + AMP + diphosphate + H(+). It functions in the pathway tRNA modification. In terms of biological role, catalyzes the ATP-dependent 2-thiolation of cytidine in position 32 of tRNA, to form 2-thiocytidine (s(2)C32). The sulfur atoms are provided by the cysteine/cysteine desulfurase (IscS) system. The protein is tRNA-cytidine(32) 2-sulfurtransferase of Shewanella oneidensis (strain ATCC 700550 / JCM 31522 / CIP 106686 / LMG 19005 / NCIMB 14063 / MR-1).